Reading from the N-terminus, the 129-residue chain is Protein LLP homolog (129 aa).

Residues 1-21 (MAKSLRSKWKRKMRAEKRKKN) are compositionally biased toward basic residues. Residues 1–27 (MAKSLRSKWKRKMRAEKRKKNAPKEAS) are disordered. Residues lysine 67 and lysine 74 each participate in a glycyl lysine isopeptide (Lys-Gly) (interchain with G-Cter in SUMO2) cross-link. A compositionally biased stretch (basic residues) spans 100 to 122 (RQRKRLKAKREKRKGKSKAKAVK). The segment at 100–129 (RQRKRLKAKREKRKGKSKAKAVKVAKGLAW) is disordered.

It belongs to the learning-associated protein family. As to quaternary structure, interacts with CTCF, MYO1C and with the transcriptional machinery, including RNA polymerase II and TBP.

The protein localises to the nucleus. It is found in the nucleolus. The protein resides in the chromosome. In terms of biological role, in hippocampal neurons, regulates dendritic and spine growth and synaptic transmission. This is Protein LLP homolog (LLPH) from Homo sapiens (Human).